The sequence spans 1111 residues: Kinesin-like protein KIP1 (1111 aa).

Positions 1–11 (MARSSLPNRRT) are enriched in polar residues. Positions 1 to 34 (MARSSLPNRRTAQFEANKRRTIAHAPSPSLSNGM) are disordered. Positions 52–410 (NIHVYVRCRS…LEYATRAKSI (359 aa)) constitute a Kinesin motor domain. 141–148 (GQTGTGKT) is an ATP binding site. Coiled coils occupy residues 424–510 (TCLK…IIQN), 648–670 (KDLNEIYQSHQQFLKNLQNDIKS), 710–780 (KLIK…DQDI), and 808–828 (HNAENTLKTVSQNNESFTNDL). The segment covering 1007 to 1016 (AENKSKDDTS) has biased composition (basic and acidic residues). Residues 1007 to 1111 (AENKSKDDTS…DILQNKKLHQ (105 aa)) form a disordered region. Composition is skewed to polar residues over residues 1017-1038 (NSRTCIPNLSTNENFPLSQFSP) and 1057-1082 (SINSAKSNRSKTLPNTEGTGRESQNN).

The protein belongs to the TRAFAC class myosin-kinesin ATPase superfamily. Kinesin family. BimC subfamily. In terms of assembly, might be dimeric.

It localises to the cytoplasm. The protein resides in the cytoskeleton. Its subcellular location is the spindle. Its function is as follows. Required for assembly of the mitotic spindle. Interacts with spindle microtubules to produce an outwardly directed force acting upon the poles. Following spindle assembly, CIN8 and KIP1 apparently act to oppose a force that draws separated poles back together. This force seems to be mediate by KAR3. In Saccharomyces cerevisiae (strain ATCC 204508 / S288c) (Baker's yeast), this protein is Kinesin-like protein KIP1 (KIP1).